Here is a 218-residue protein sequence, read N- to C-terminus: 4-coumaroyl-homoserine lactone synthase (218 aa).

This sequence belongs to the autoinducer synthase family.

It carries out the reaction 4-coumaroyl-CoA + S-adenosyl-L-methionine = N-(4-coumaroyl)-L-homoserine lactone + S-methyl-5'-thioadenosine + CoA + H(+). Functionally, catalyzes the synthesis of 4-coumaroyl-homoserine lactone, a quorum-sensing (QS) autoinducer molecule which binds to RpaR transcriptional regulator to regulate expression of QS-dependent genes. The sequence is that of 4-coumaroyl-homoserine lactone synthase from Rhodopseudomonas palustris (strain ATCC BAA-98 / CGA009).